The sequence spans 449 residues: Glucose-6-phosphate isomerase (449 aa).

Catalysis depends on glutamate 291, which acts as the Proton donor. Active-site residues include histidine 312 and lysine 426.

The protein belongs to the GPI family.

The protein resides in the cytoplasm. It catalyses the reaction alpha-D-glucose 6-phosphate = beta-D-fructose 6-phosphate. The protein operates within carbohydrate biosynthesis; gluconeogenesis. It participates in carbohydrate degradation; glycolysis; D-glyceraldehyde 3-phosphate and glycerone phosphate from D-glucose: step 2/4. In terms of biological role, catalyzes the reversible isomerization of glucose-6-phosphate to fructose-6-phosphate. This chain is Glucose-6-phosphate isomerase, found in Pediococcus pentosaceus (strain ATCC 25745 / CCUG 21536 / LMG 10740 / 183-1w).